The sequence spans 416 residues: Phosphoribosylamine--glycine ligase (416 aa).

The ATP-grasp domain occupies 107–313 (KDFMKKYNVK…FVDLINAAMD (207 aa)). 133-194 (LKKCTYPIVI…EEYLEGVEAS (62 aa)) provides a ligand contact to ATP. Positions 283 and 285 each coordinate Mg(2+).

This sequence belongs to the GARS family. The cofactor is Mg(2+). Mn(2+) is required as a cofactor.

It carries out the reaction 5-phospho-beta-D-ribosylamine + glycine + ATP = N(1)-(5-phospho-beta-D-ribosyl)glycinamide + ADP + phosphate + H(+). It functions in the pathway purine metabolism; IMP biosynthesis via de novo pathway; N(1)-(5-phospho-D-ribosyl)glycinamide from 5-phospho-alpha-D-ribose 1-diphosphate: step 2/2. In Clostridium acetobutylicum (strain ATCC 824 / DSM 792 / JCM 1419 / IAM 19013 / LMG 5710 / NBRC 13948 / NRRL B-527 / VKM B-1787 / 2291 / W), this protein is Phosphoribosylamine--glycine ligase.